Here is a 386-residue protein sequence, read N- to C-terminus: NADPH-dependent alkenal/one oxidoreductase, chloroplastic (386 aa).

This sequence belongs to the zinc-containing alcohol dehydrogenase family. Quinone oxidoreductase subfamily.

It localises to the plastid. It is found in the chloroplast. In terms of biological role, reduces the double bond in short-chain unsaturated carbonyls. Acts preferentially on alpha,beta-unsaturated ketones rather on alpha,beta-unsaturated aldehydes. Has no activity with (E)-2-hexenal and (E)-2-pentenal. Contributes to detoxify stromal reactive carbonyls produced under oxidative stress. This chain is NADPH-dependent alkenal/one oxidoreductase, chloroplastic, found in Arabidopsis thaliana (Mouse-ear cress).